Here is a 154-residue protein sequence, read N- to C-terminus: Transcription antitermination protein NusB (154 aa).

It belongs to the NusB family.

Functionally, involved in transcription antitermination. Required for transcription of ribosomal RNA (rRNA) genes. Binds specifically to the boxA antiterminator sequence of the ribosomal RNA (rrn) operons. In Bordetella parapertussis (strain 12822 / ATCC BAA-587 / NCTC 13253), this protein is Transcription antitermination protein NusB.